Consider the following 302-residue polypeptide: Sulfate adenylyltransferase subunit 2 (302 aa).

This sequence belongs to the PAPS reductase family. CysD subfamily. In terms of assembly, heterodimer composed of CysD, the smaller subunit, and CysN.

The catalysed reaction is sulfate + ATP + H(+) = adenosine 5'-phosphosulfate + diphosphate. It participates in sulfur metabolism; hydrogen sulfide biosynthesis; sulfite from sulfate: step 1/3. In terms of biological role, with CysN forms the ATP sulfurylase (ATPS) that catalyzes the adenylation of sulfate producing adenosine 5'-phosphosulfate (APS) and diphosphate, the first enzymatic step in sulfur assimilation pathway. APS synthesis involves the formation of a high-energy phosphoric-sulfuric acid anhydride bond driven by GTP hydrolysis by CysN coupled to ATP hydrolysis by CysD. This Salmonella paratyphi A (strain AKU_12601) protein is Sulfate adenylyltransferase subunit 2.